Here is a 308-residue protein sequence, read N- to C-terminus: E3 ubiquitin-protein ligase RING2 (308 aa).

Ser2 carries the post-translational modification N-acetylserine. Residues Ser2–Cys179 are interaction with HIP2. A Phosphoserine modification is found at Ser41. Residues Cys51–Arg91 form an RING-type zinc finger. The interaction with nucleosomes via an acidic patch on histone H2A and histone H2B stretch occupies residues Lys93–Arg98. A Glycyl lysine isopeptide (Lys-Gly) (interchain with G-Cter in ubiquitin) cross-link involves residue Lys112. Ser143 and Ser168 each carry phosphoserine. Residues Gln157–Glu206 are disordered. Residues Ser176–Gly191 show a composition bias toward polar residues. A Glycyl lysine isopeptide (Lys-Gly) (interchain with G-Cter in SUMO2) cross-link involves residue Lys249.

In terms of assembly, component of chromatin-associated Polycomb (PcG) complexes. Component of a number of PRC1-like complexes; these complexes contain either the polycomb group ring finger protein PCGF1, or PCGF2, or PCGF3, or BMI1, or PCGF5, or PCGF6. Distinct PRC1-like complexes are composed of a RING1 subunit (RING1B or RING1A), one of the six PCGF proteins (PCGF1, PCGF2, PCGF3, BMI1, PCGF5 or PCGF6), one PHC protein (PHC1, PHC2 or PHC3) and one of the CBX proteins (CBX2, CBX4, CBX6, CBX7 or CBX8). Part of a complex that contains RNF2, UB2D3 and BMI1; within that complex RNF2 and BMI1 form a tight heterodimer, where UB2D3 interacts only with RNF2. The complex composed of RNF2, UB2D3 and BMI1 binds nucleosomes, and has activity only with nucleosomal histone H2A. Part of a complex that contains PCGF5, RNF2 and UBE2D3. Part of a complex that contains AUTS2, PCGF5, RNF2, CSNK2B and RYBP. Interacts with CBX6 and CBX8. Interacts with PHC1, PCGF2, RYBP, CBX7, CBX4, CBX2, RNF1/RING1, BMI1 and PHC2. Interaction with RYBP and CBX7 is mutually exclusive; both compete for the same binding site on RNF2. Component of repressive BCOR complex containing a Polycomb group subcomplex at least composed of RYBP, PCGF1, BCOR and RING1. Interacts with CBX2 and PHC1. Interacts with CHTOP. Interacts with AURKB. Part of the E2F6.com-1 complex in G0 phase composed of E2F6, MGA, MAX, TFDP1, CBX3, BAT8, EUHMTASE1, RNF1/RING1, RNF2/RING2, MBLR, L3MBTL2 and YAF2. Component of some MLL1/MLL complex, at least composed of the core components KMT2A/MLL1, ASH2L, HCFC1/HCF1, WDR5 and RBBP5, as well as the facultative components BACC1, CHD8, E2F6, HSP70, INO80C, KANSL1, LAS1L, MAX, MCRS1, MGA, MYST1/MOF, PELP1, PHF20, PRP31, RING2, RUVB1/TIP49A, RUVB2/TIP49B, SENP3, TAF1, TAF4, TAF6, TAF7, TAF9 and TEX10. Interacts with RYBP, HIP2 and TFCP2. Interacts with NUPR1. Interacts with SAMD7 in a PHC2-dependent manner. In terms of processing, monoubiquitinated, by auto-ubiquitination. Polyubiquitinated in the presence of UBE2D3 (in vitro).

It localises to the nucleus. It is found in the cytoplasm. Its subcellular location is the chromosome. The enzyme catalyses S-ubiquitinyl-[E2 ubiquitin-conjugating enzyme]-L-cysteine + [acceptor protein]-L-lysine = [E2 ubiquitin-conjugating enzyme]-L-cysteine + N(6)-ubiquitinyl-[acceptor protein]-L-lysine.. The protein operates within protein modification; protein ubiquitination. Its function is as follows. E3 ubiquitin-protein ligase that mediates monoubiquitination of 'Lys-119' of histone H2A (H2AK119Ub), thereby playing a central role in histone code and gene regulation. H2AK119Ub gives a specific tag for epigenetic transcriptional repression and participates in X chromosome inactivation of female mammals. May be involved in the initiation of both imprinted and random X inactivation. Essential component of a Polycomb group (PcG) multiprotein PRC1-like complex, a complex class required to maintain the transcriptionally repressive state of many genes, including Hox genes, throughout development. PcG PRC1 complex acts via chromatin remodeling and modification of histones, rendering chromatin heritably changed in its expressibility. E3 ubiquitin-protein ligase activity is enhanced by BMI1/PCGF4. Acts as the main E3 ubiquitin ligase on histone H2A of the PRC1 complex, while RING1 may rather act as a modulator of RNF2/RING2 activity. Plays a role in the transcriptional repression of genes that are required for pluripotency in embryonic stem cells, thereby contributing to differentiation of the ectodermal and endodermal germ layers. Association with the chromosomal DNA is cell-cycle dependent. In resting B- and T-lymphocytes, interaction with AURKB leads to block its activity, thereby maintaining transcription in resting lymphocytes. Also acts as a negative regulator of autophagy by mediating ubiquitination of AMBRA1, leading to its subsequent degradation. The polypeptide is E3 ubiquitin-protein ligase RING2 (Rnf2) (Rattus norvegicus (Rat)).